The primary structure comprises 113 residues: Small ribosomal subunit protein bS16 (113 aa).

A disordered region spans residues 84–113; it reads PKPAYTEQPKKSAPKKRAQERAAAAAAAAA.

It belongs to the bacterial ribosomal protein bS16 family.

This is Small ribosomal subunit protein bS16 from Gluconacetobacter diazotrophicus (strain ATCC 49037 / DSM 5601 / CCUG 37298 / CIP 103539 / LMG 7603 / PAl5).